Reading from the N-terminus, the 291-residue chain is tRNA dimethylallyltransferase (291 aa).

9-16 (GTTASGKS) serves as a coordination point for ATP. A substrate-binding site is contributed by 11–16 (TASGKS). Residues 34–37 (DSLA) are interaction with substrate tRNA.

Belongs to the IPP transferase family. As to quaternary structure, monomer. Requires Mg(2+) as cofactor.

It catalyses the reaction adenosine(37) in tRNA + dimethylallyl diphosphate = N(6)-dimethylallyladenosine(37) in tRNA + diphosphate. In terms of biological role, catalyzes the transfer of a dimethylallyl group onto the adenine at position 37 in tRNAs that read codons beginning with uridine, leading to the formation of N6-(dimethylallyl)adenosine (i(6)A). This is tRNA dimethylallyltransferase from Campylobacter concisus (strain 13826).